A 156-amino-acid polypeptide reads, in one-letter code: Small ribosomal subunit protein uS7 (156 aa).

This sequence belongs to the universal ribosomal protein uS7 family. In terms of assembly, part of the 30S ribosomal subunit. Contacts proteins S9 and S11.

Its function is as follows. One of the primary rRNA binding proteins, it binds directly to 16S rRNA where it nucleates assembly of the head domain of the 30S subunit. Is located at the subunit interface close to the decoding center, probably blocks exit of the E-site tRNA. The sequence is that of Small ribosomal subunit protein uS7 from Anaeromyxobacter dehalogenans (strain 2CP-1 / ATCC BAA-258).